The following is a 686-amino-acid chain: Zinc finger protein 7 (686 aa).

The region spanning 4–76 (VTFGDVAVHF…DLQGAEGTEA (73 aa)) is the KRAB domain. Glycyl lysine isopeptide (Lys-Gly) (interchain with G-Cter in SUMO2) cross-links involve residues K81 and K101. Phosphoserine is present on residues S126 and S138. C2H2-type zinc fingers lie at residues 223 to 245 (SRCQECQKKLSDCLQGKHTNNCH), 250 to 272 (YECAECGKVFRLCSQLNQHQRIH), 278 to 300 (FKCTECGKAFRLSSKLIQHQRIH), 306 to 328 (YRCEECGKAFGQSSSLIHHQRIH), 334 to 356 (YGCRECGKAFSQQSQLVRHQRTH), and 362 to 384 (YPCKECGKAFSQSSTLAQHQRMH). Glycyl lysine isopeptide (Lys-Gly) (interchain with G-Cter in SUMO2) cross-links involve residues K279 and K292. K393 is covalently cross-linked (Glycyl lysine isopeptide (Lys-Gly) (interchain with G-Cter in SUMO2)). 9 consecutive C2H2-type zinc fingers follow at residues 413 to 435 (FKCDECGKAFRWISRLSQHQLIH), 441 to 463 (YKCNKCTKAFGCSSRLIRHQRTH), 469 to 491 (FKCDECGKGFVQGSHLIQHQRIH), 497 to 519 (YVCNDCGKAFSQSSSLIYHQRIH), 525 to 547 (YECLQCGKAFSMSTQLTIHQRVH), 553 to 575 (YKCNECGKAFSQNSTLFQHQIIH), 581 to 603 (YECSECGKAFSRSSYLIEHQRIH), 634 to 656 (HQCEDCEKIFRWRSHLIIHQRIH), and 662 to 684 (YKCNDCGKAFNRSSRLTQHQKIH).

It belongs to the krueppel C2H2-type zinc-finger protein family.

The protein localises to the nucleus. Its function is as follows. May be involved in transcriptional regulation. This is Zinc finger protein 7 (ZNF7) from Pongo abelii (Sumatran orangutan).